The sequence spans 150 residues: 1,4-dihydroxy-2-naphthoyl-CoA hydrolase (150 aa).

Asp-19 is a catalytic residue.

The protein belongs to the 4-hydroxybenzoyl-CoA thioesterase family. DHNA-CoA hydrolase subfamily.

It carries out the reaction 1,4-dihydroxy-2-naphthoyl-CoA + H2O = 1,4-dihydroxy-2-naphthoate + CoA + H(+). Its pathway is cofactor biosynthesis; phylloquinone biosynthesis. It functions in the pathway quinol/quinone metabolism; 1,4-dihydroxy-2-naphthoate biosynthesis; 1,4-dihydroxy-2-naphthoate from chorismate: step 7/7. Catalyzes the hydrolysis of 1,4-dihydroxy-2-naphthoyl-CoA (DHNA-CoA) to 1,4-dihydroxy-2-naphthoate (DHNA), a reaction involved in phylloquinone (vitamin K1) biosynthesis. The chain is 1,4-dihydroxy-2-naphthoyl-CoA hydrolase from Prochlorococcus marinus (strain MIT 9515).